Reading from the N-terminus, the 113-residue chain is Large ribosomal subunit protein uL24 (113 aa).

It belongs to the universal ribosomal protein uL24 family. Part of the 50S ribosomal subunit.

One of two assembly initiator proteins, it binds directly to the 5'-end of the 23S rRNA, where it nucleates assembly of the 50S subunit. In terms of biological role, one of the proteins that surrounds the polypeptide exit tunnel on the outside of the subunit. This is Large ribosomal subunit protein uL24 from Synechococcus elongatus (strain ATCC 33912 / PCC 7942 / FACHB-805) (Anacystis nidulans R2).